A 171-amino-acid polypeptide reads, in one-letter code: Co-chaperone protein HscB (171 aa).

Residues 2-74 (DYFTLFGLPA…LMRAEYLLSL (73 aa)) enclose the J domain.

Belongs to the HscB family. As to quaternary structure, interacts with HscA and stimulates its ATPase activity. Interacts with IscU.

Co-chaperone involved in the maturation of iron-sulfur cluster-containing proteins. Seems to help targeting proteins to be folded toward HscA. In Escherichia coli (strain SMS-3-5 / SECEC), this protein is Co-chaperone protein HscB.